A 131-amino-acid polypeptide reads, in one-letter code: Large ribosomal subunit protein eL32 (131 aa).

The protein belongs to the eukaryotic ribosomal protein eL32 family.

The protein is Large ribosomal subunit protein eL32 (RPL32) of Eremothecium gossypii (strain ATCC 10895 / CBS 109.51 / FGSC 9923 / NRRL Y-1056) (Yeast).